The sequence spans 336 residues: Peroxidase 72 (336 aa).

The N-terminal stretch at 1 to 23 (MAKSLNILIAALSLIAFSPFCLC) is a signal peptide. Cystine bridges form between Cys-42–Cys-122, Cys-75–Cys-80, Cys-128–Cys-329, and Cys-207–Cys-239. Residue His-73 is the Proton acceptor of the active site. Residues Asp-74, Val-77, Gly-79, Asp-81, and Ser-83 each contribute to the Ca(2+) site. Substrate is bound at residue Pro-170. N-linked (GlcNAc...) asparagine glycosylation is present at Asn-173. His-200 lines the heme b pocket. Thr-201 is a Ca(2+) binding site. N-linked (GlcNAc...) asparagine glycosylation occurs at Asn-216. Ca(2+) contacts are provided by Asp-252, Thr-255, and Asp-260.

It belongs to the peroxidase family. Classical plant (class III) peroxidase subfamily. It depends on heme b as a cofactor. The cofactor is Ca(2+). Slightly expressed in roots.

It is found in the secreted. The catalysed reaction is 2 a phenolic donor + H2O2 = 2 a phenolic radical donor + 2 H2O. Its function is as follows. Removal of H(2)O(2), oxidation of toxic reductants, biosynthesis and degradation of lignin, suberization, auxin catabolism, response to environmental stresses such as wounding, pathogen attack and oxidative stress. These functions might be dependent on each isozyme/isoform in each plant tissue. This chain is Peroxidase 72 (PER72), found in Arabidopsis thaliana (Mouse-ear cress).